Reading from the N-terminus, the 239-residue chain is Ribose-5-phosphate isomerase A (239 aa).

Substrate contacts are provided by residues phenylalanine 31–threonine 34, aspartate 88–aspartate 91, and lysine 101–glycine 104. Residue glutamate 110 is the Proton acceptor of the active site. Lysine 128 provides a ligand contact to substrate.

The protein belongs to the ribose 5-phosphate isomerase family. As to quaternary structure, homodimer.

The catalysed reaction is aldehydo-D-ribose 5-phosphate = D-ribulose 5-phosphate. Its pathway is carbohydrate degradation; pentose phosphate pathway; D-ribose 5-phosphate from D-ribulose 5-phosphate (non-oxidative stage): step 1/1. Functionally, catalyzes the reversible conversion of ribose-5-phosphate to ribulose 5-phosphate. This is Ribose-5-phosphate isomerase A from Chloroflexus aurantiacus (strain ATCC 29366 / DSM 635 / J-10-fl).